The chain runs to 266 residues: MSVKVMTHDNMFVGMKEVDHYLAPSDYEDESESELFYESYYSDDIFEDNESDLWVDHEDDPWIEQLDDPVKTPKIIKPYPWMTSPTKSVDKAAQKEKKMPDWWTKPTTVTPTRNEQGILNYSLLLPPSTKKPTQPNKRRKNGGAKPPNSKPLGNPAKPNGVSQQQQGPKRDSTQQPTRLCKSVLKQAKCYFGAQCGYAHRYSDLKECSYGKNCKKIVLVRVNQDGTLHLANKPGAVCNFKHTNEAQQSYLARLPQSTASPKNPRKK.

Positions 84 to 176 (SPTKSVDKAA…GPKRDSTQQP (93 aa)) are disordered. Basic and acidic residues predominate over residues 88–100 (SVDKAAQKEKKMP). Polar residues-rich tracts occupy residues 105-119 (KPTT…QGIL) and 160-176 (GVSQ…TQQP). The C3H1-type zinc-finger motif lies at 180–192 (CKSVLKQAKCYFG).

It belongs to the IIV-6 077L family.

In Aedes vexans (Inland floodwater mosquito), this protein is Putative zinc finger protein 034R.